We begin with the raw amino-acid sequence, 637 residues long: Early transcription factor 70 kDa subunit (637 aa).

Belongs to the helicase family. VETF subfamily. Heterodimer of a 70 kDa and a 82 kDa subunit. Part of the early transcription complex composed of ETF, RAP94/OPG109, and the DNA-directed RNA polymerase. Apparently non-glycosylated.

It is found in the virion. Its function is as follows. Acts with RNA polymerase to initiate transcription from early gene promoters. Is recruited by the RPO-associated protein of 94 kDa RAP94/OPG109 to form the early transcription complex, which also contains the core RNA polymerase. ETF heterodimer binds to early gene promoters. This is Early transcription factor 70 kDa subunit (OPG118) from Monkeypox virus.